The chain runs to 88 residues: Sec-independent protein translocase protein TatA (88 aa).

A helical membrane pass occupies residues 1 to 21; that stretch reads MNLGPTEILLILVIVVLLFGA. Residues 46 to 56 show a composition bias toward basic and acidic residues; sequence SNDDQRYEEQQ. The tract at residues 46–88 is disordered; the sequence is SNDDQRYEEQQQQRQIAAQAQQQVVNPVEIPQPQPTDIQRPQQ. Residues 57-68 are compositionally biased toward low complexity; that stretch reads QQRQIAAQAQQQ.

Belongs to the TatA/E family. As to quaternary structure, the Tat system comprises two distinct complexes: a TatABC complex, containing multiple copies of TatA, TatB and TatC subunits, and a separate TatA complex, containing only TatA subunits. Substrates initially bind to the TatABC complex, which probably triggers association of the separate TatA complex to form the active translocon.

The protein localises to the cell membrane. Functionally, part of the twin-arginine translocation (Tat) system that transports large folded proteins containing a characteristic twin-arginine motif in their signal peptide across membranes. TatA could form the protein-conducting channel of the Tat system. This Corynebacterium diphtheriae (strain ATCC 700971 / NCTC 13129 / Biotype gravis) protein is Sec-independent protein translocase protein TatA.